The sequence spans 797 residues: Inactive dipeptidyl peptidase 10 (797 aa).

The interval 1–28 (MKQEQQPTPGARATQSQPADQELGSNSP) is disordered. The Cytoplasmic segment spans residues 1-34 (MKQEQQPTPGARATQSQPADQELGSNSPPQRNWK). A helical; Signal-anchor for type II membrane protein transmembrane segment spans residues 35 to 55 (GIAIALLVILVVCSLITMSVI). The Extracellular portion of the chain corresponds to 56 to 797 (LLTPDELTNS…VLPQEPEEDE (742 aa)). N-linked (GlcNAc...) asparagine glycosylation is found at Asn-64, Asn-91, Asn-112, and Asn-120. 2 positions are modified to phosphotyrosine: Tyr-139 and Tyr-144. Asn-258, Asn-343, Asn-518, and Asn-749 each carry an N-linked (GlcNAc...) asparagine glycan.

It belongs to the peptidase S9B family. DPPIV subfamily. In terms of assembly, may form oligomers. Interacts with KCND1 and KCND2. N-glycosylation is important for cell surface expression, specially at Asn-258, which is crucial. Detected in brain cortex (at protein level). Expressed in the brain, predominantly by neurons and not by glia.

The protein resides in the cell membrane. Functionally, promotes cell surface expression of the potassium channel KCND2. Modulates the activity and gating characteristics of the potassium channel KCND2. Has no dipeptidyl aminopeptidase activity. This is Inactive dipeptidyl peptidase 10 (Dpp10) from Mus musculus (Mouse).